The primary structure comprises 539 residues: Phosphoenolpyruvate carboxykinase (ATP) (539 aa).

Residues R64, Y206, and K212 each contribute to the substrate site. ATP is bound by residues K212, H231, and 247–255; that span reads GLSGTGKTT. K212 and H231 together coordinate Mn(2+). Position 268 (D268) interacts with Mn(2+). Residues E296, R332, 448–449, and T454 each bind ATP; that span reads RI. Position 332 (R332) interacts with substrate.

This sequence belongs to the phosphoenolpyruvate carboxykinase (ATP) family. As to quaternary structure, monomer. The cofactor is Mn(2+).

The protein localises to the cytoplasm. The enzyme catalyses oxaloacetate + ATP = phosphoenolpyruvate + ADP + CO2. It participates in carbohydrate biosynthesis; gluconeogenesis. Involved in the gluconeogenesis. Catalyzes the conversion of oxaloacetate (OAA) to phosphoenolpyruvate (PEP) through direct phosphoryl transfer between the nucleoside triphosphate and OAA. This chain is Phosphoenolpyruvate carboxykinase (ATP), found in Yersinia pseudotuberculosis serotype IB (strain PB1/+).